A 199-amino-acid polypeptide reads, in one-letter code: Recombination protein RecR (199 aa).

The C4-type zinc finger occupies 58–73 (CVRCGNITNADLCGIC). Residues 81 to 176 (GELCVVEDVA…QVTSLAQGVP (96 aa)) enclose the Toprim domain.

It belongs to the RecR family.

In terms of biological role, may play a role in DNA repair. It seems to be involved in an RecBC-independent recombinational process of DNA repair. It may act with RecF and RecO. The protein is Recombination protein RecR of Cereibacter sphaeroides (strain ATCC 17029 / ATH 2.4.9) (Rhodobacter sphaeroides).